The primary structure comprises 306 residues: MITAQMVKELRERTGAGMMDCKKALNEAGGDSEKAIEILREKGLAAAAKKSGRIASEGLVKTYISEDGKVASIVEVNCETDFVAVNADFVNFVDNLAKQISLSESTTVEELSEEKYISDDSKTVSETLVNLISKLGENMAIRRFERLAVSKGLIESYIHGGGRIGVLVKLECEKESEILKEVAKDVAMQVAATNPLFLSKDTVDSATLDKEKEIFKVQALNEGKPEKIAEKIVIGRVQKYYKENCLIEQLWVKDSDLTIDKYLKSKSKEVGAPIKISNFIRFEKGEGIEKKEEDFAEEVRKQIEGK.

The tract at residues 80–83 is involved in Mg(2+) ion dislocation from EF-Tu; the sequence is TDFV.

This sequence belongs to the EF-Ts family.

The protein localises to the cytoplasm. Functionally, associates with the EF-Tu.GDP complex and induces the exchange of GDP to GTP. It remains bound to the aminoacyl-tRNA.EF-Tu.GTP complex up to the GTP hydrolysis stage on the ribosome. This chain is Elongation factor Ts, found in Clostridium kluyveri (strain NBRC 12016).